A 72-amino-acid chain; its full sequence is uncharacterized protein (72 aa).

This sequence belongs to the phage portal family. HK97 subfamily.

This is an uncharacterized protein from Rickettsia conorii (strain ATCC VR-613 / Malish 7).